The sequence spans 406 residues: Subtilisin-like protease CPC735_023170 (406 aa).

The signal sequence occupies residues 1 to 20 (MRLFQSTCVLVGTVLPLFTA). The propeptide occupies 21–118 (FPISSPREIE…VEPDSMAYVT (98 aa)). Residues 35–115 (KYIITFKKGI…VESVEPDSMA (81 aa)) enclose the Inhibitor I9 domain. N-linked (GlcNAc...) asparagine glycosylation occurs at N125. One can recognise a Peptidase S8 domain in the interval 127–406 (TYGPRRISHR…NKLAYNGSGK (280 aa)). Residues D161 and H192 each act as charge relay system in the active site. N239 carries an N-linked (GlcNAc...) asparagine glycan. Positions 283 to 309 (NDGRDAGRNSPGSAPESITVGSINSRR) are disordered. A glycan (N-linked (GlcNAc...) asparagine) is linked at N346. S351 acts as the Charge relay system in catalysis. Residue N402 is glycosylated (N-linked (GlcNAc...) asparagine).

The protein belongs to the peptidase S8 family.

The protein localises to the secreted. Functionally, secreted subtilisin-like serine protease with keratinolytic activity that contributes to pathogenicity. This is Subtilisin-like protease CPC735_023170 from Coccidioides posadasii (strain C735) (Valley fever fungus).